The sequence spans 444 residues: Tubulin beta chain (444 aa).

8 residues coordinate GTP: glutamine 11, glutamate 68, serine 137, glycine 141, threonine 142, glycine 143, asparagine 203, and asparagine 225. Glutamate 68 contacts Mg(2+). The disordered stretch occupies residues 424 to 444 (QDATAEEEGEFDEDEEMDEMM). The span at 427–444 (TAEEEGEFDEDEEMDEMM) shows a compositional bias: acidic residues.

The protein belongs to the tubulin family. Dimer of alpha and beta chains. A typical microtubule is a hollow water-filled tube with an outer diameter of 25 nm and an inner diameter of 15 nM. Alpha-beta heterodimers associate head-to-tail to form protofilaments running lengthwise along the microtubule wall with the beta-tubulin subunit facing the microtubule plus end conferring a structural polarity. Microtubules usually have 13 protofilaments but different protofilament numbers can be found in some organisms and specialized cells. Mg(2+) is required as a cofactor.

Its subcellular location is the cytoplasm. The protein resides in the cytoskeleton. Tubulin is the major constituent of microtubules, a cylinder consisting of laterally associated linear protofilaments composed of alpha- and beta-tubulin heterodimers. Microtubules grow by the addition of GTP-tubulin dimers to the microtubule end, where a stabilizing cap forms. Below the cap, tubulin dimers are in GDP-bound state, owing to GTPase activity of alpha-tubulin. This is Tubulin beta chain from Achlya klebsiana.